The sequence spans 320 residues: Transcription factor MYB80 (320 aa).

HTH myb-type domains are found at residues 9–65 and 66–116; these read KENV…RPDL and KHGQ…KKKL. 2 DNA-binding regions (H-T-H motif) span residues 37-61 and 89-112; these read WRLIPKNAGLQRCGKSCRLRWTNYL and WSLIAAQLPGRTDNDVKNYWNTKL. A disordered region spans residues 257–283; that stretch reads TAAAEEEERRKLKGEVVDQEEIGSEGG. Over residues 263–272 the composition is skewed to basic and acidic residues; it reads EERRKLKGEV.

Expressed in the tapetum and middle layer of developing anthers. Expressed in trichomes.

It localises to the nucleus. Functionally, transcription factor that binds to the DNA sequence 5'-CCAACC-3'. Regulates directly PME5, UND and GLOX1. Essential for tapetum development in anthers and microsporogenesis. Regulates the timing of tapetal programmed cell death (PCD) which is critical for pollen development. May act through the activation of UND, encoding an A1 aspartic protease. Required for anther development by regulating tapetum development, callose dissolution and exine formation. Acts upstream of A6 and FAR2/MS2, two genes required for pollen exine formation. Negatively regulates trichome endoreduplication and trichome branching. The chain is Transcription factor MYB80 from Arabidopsis thaliana (Mouse-ear cress).